Reading from the N-terminus, the 203-residue chain is Microtubule-associated protein Jupiter (203 aa).

Residue serine 30 is modified to Phosphoserine. 2 positions are modified to phosphothreonine: threonine 41 and threonine 102. Positions 123–132 are enriched in polar residues; the sequence is LISKGNYNGK. Disordered stretches follow at residues 123–163 and 182–203; these read LISK…GNPV and NGGS…SGLW. Residues 133-146 are compositionally biased toward low complexity; it reads SGSVSSASSSVSSS. Residues serine 135 and serine 146 each carry the phosphoserine modification.

Belongs to the MAP Jupiter family.

It localises to the nucleus. Its subcellular location is the cytoplasm. It is found in the cytoskeleton. The protein localises to the spindle. Its function is as follows. Binds to all microtubule populations. In Drosophila mojavensis (Fruit fly), this protein is Microtubule-associated protein Jupiter.